The sequence spans 124 residues: Ribonuclease pancreatic (124 aa).

Basic and acidic residues predominate over residues 1–13; the sequence is KETAAAKFERQHM. The segment at 1–22 is disordered; sequence KETAAAKFERQHMDSSTSAASS. The substrate site is built by Lys-7 and Arg-10. Catalysis depends on His-12, which acts as the Proton acceptor. 4 cysteine pairs are disulfide-bonded: Cys-26-Cys-84, Cys-40-Cys-95, Cys-58-Cys-110, and Cys-65-Cys-72. N-linked (GlcNAc...) asparagine glycosylation occurs at Asn-34. Substrate is bound by residues 41–45, Lys-66, and Arg-85; that span reads KPVNT. His-119 functions as the Proton donor in the catalytic mechanism.

It belongs to the pancreatic ribonuclease family. Monomer. Interacts with and forms tight 1:1 complexes with RNH1. Dimerization of two such complexes may occur. Interaction with RNH1 inhibits this protein. As to expression, pancreas.

Its subcellular location is the secreted. The catalysed reaction is an [RNA] containing cytidine + H2O = an [RNA]-3'-cytidine-3'-phosphate + a 5'-hydroxy-ribonucleotide-3'-[RNA].. It catalyses the reaction an [RNA] containing uridine + H2O = an [RNA]-3'-uridine-3'-phosphate + a 5'-hydroxy-ribonucleotide-3'-[RNA].. Functionally, endonuclease that catalyzes the cleavage of RNA on the 3' side of pyrimidine nucleotides. Acts on single-stranded and double-stranded RNA. This chain is Ribonuclease pancreatic (RNASE1), found in Bison bison (American bison).